The following is a 137-amino-acid chain: Large-conductance mechanosensitive channel (137 aa).

2 consecutive transmembrane segments (helical) span residues 9–29 (AFAVKGNVVDMAVGIIIGAAF) and 79–99 (IQSVLDFVIVAFAIFMGVKAI).

It belongs to the MscL family. As to quaternary structure, homopentamer.

It is found in the cell inner membrane. Its function is as follows. Channel that opens in response to stretch forces in the membrane lipid bilayer. May participate in the regulation of osmotic pressure changes within the cell. In Pseudomonas fluorescens (strain Pf0-1), this protein is Large-conductance mechanosensitive channel.